The sequence spans 429 residues: Phosphomethylpyrimidine synthase (429 aa).

Residues N66, M95, Y124, H163, 185 to 187 (SRG), 226 to 229 (DAMR), and E265 each bind substrate. Zn(2+) is bound at residue H269. Y292 contributes to the substrate binding site. Residue H333 coordinates Zn(2+). [4Fe-4S] cluster contacts are provided by C409, C412, and C416.

The protein belongs to the ThiC family. It depends on [4Fe-4S] cluster as a cofactor.

The catalysed reaction is 5-amino-1-(5-phospho-beta-D-ribosyl)imidazole + S-adenosyl-L-methionine = 4-amino-2-methyl-5-(phosphooxymethyl)pyrimidine + CO + 5'-deoxyadenosine + formate + L-methionine + 3 H(+). The protein operates within cofactor biosynthesis; thiamine diphosphate biosynthesis. Catalyzes the synthesis of the hydroxymethylpyrimidine phosphate (HMP-P) moiety of thiamine from aminoimidazole ribotide (AIR) in a radical S-adenosyl-L-methionine (SAM)-dependent reaction. The chain is Phosphomethylpyrimidine synthase from Methanopyrus kandleri (strain AV19 / DSM 6324 / JCM 9639 / NBRC 100938).